The following is a 187-amino-acid chain: DNA-directed RNA polymerase subunit Rpo7 (187 aa).

The S1 motif domain occupies 82–166; sequence YELIEGEVVD…RGSKIALTMR (85 aa).

This sequence belongs to the eukaryotic RPB7/RPC8 RNA polymerase subunit family. As to quaternary structure, part of the RNA polymerase complex. Forms a stalk with Rpo4 that extends from the main structure.

It localises to the cytoplasm. It carries out the reaction RNA(n) + a ribonucleoside 5'-triphosphate = RNA(n+1) + diphosphate. In terms of biological role, DNA-dependent RNA polymerase (RNAP) catalyzes the transcription of DNA into RNA using the four ribonucleoside triphosphates as substrates. This Methanocaldococcus jannaschii (strain ATCC 43067 / DSM 2661 / JAL-1 / JCM 10045 / NBRC 100440) (Methanococcus jannaschii) protein is DNA-directed RNA polymerase subunit Rpo7.